The following is a 223-amino-acid chain: N-terminal Xaa-Pro-Lys N-methyltransferase 1 (223 aa).

S-adenosyl-L-methionine contacts are provided by residues G69, R74, 91–93 (DVT), 119–120 (LQ), and Q135.

The protein belongs to the methyltransferase superfamily. NTM1 family.

The protein resides in the nucleus. It catalyses the reaction N-terminal L-alanyl-L-prolyl-L-lysyl-[protein] + 3 S-adenosyl-L-methionine = N-terminal N,N,N-trimethyl-L-alanyl-L-prolyl-L-lysyl-[protein] + 3 S-adenosyl-L-homocysteine + 3 H(+). The enzyme catalyses N-terminal L-seryl-L-prolyl-L-lysyl-[protein] + 3 S-adenosyl-L-methionine = N-terminal N,N,N-trimethyl-L-seryl-L-prolyl-L-lysyl-[protein] + 3 S-adenosyl-L-homocysteine + 3 H(+). The catalysed reaction is N-terminal L-prolyl-L-prolyl-L-lysyl-[protein] + 2 S-adenosyl-L-methionine = N-terminal N,N-dimethyl-L-prolyl-L-prolyl-L-lysyl-[protein] + 2 S-adenosyl-L-homocysteine + 2 H(+). In terms of biological role, distributive alpha-N-methyltransferase that methylates the N-terminus of target proteins containing the N-terminal motif [Ala/Gly/Pro/Ser]-Pro-Lys when the initiator Met is cleaved. Specifically catalyzes mono-, di- or tri-methylation of the exposed alpha-amino group of the Ala, Gly or Ser residue in the [Ala/Gly/Ser]-Pro-Lys motif and mono- or di-methylation of Pro in the Pro-Pro-Lys motif. Required during mitosis for normal bipolar spindle formation and chromosome segregation via its action on target proteins. This Danio rerio (Zebrafish) protein is N-terminal Xaa-Pro-Lys N-methyltransferase 1 (ntmt1).